Here is a 239-residue protein sequence, read N- to C-terminus: Probable inner membrane transporter protein TsaS (239 aa).

The next 4 membrane-spanning stretches (helical) occupy residues 65–85 (AIGAILPGMAVGALIGLWLMG), 128–148 (GLVGVLEVMFATAGPMVIALL), 160–180 (ATVPVVMVVAASIAIAVLFGA), and 186–206 (AHTFERWLVALPIAFMGVVLG).

It belongs to the 4-toluene sulfonate uptake permease (TSUP) (TC 2.A.102) family. Part of a two-component transport system composed of TsaT and TsaS.

The protein resides in the cell inner membrane. In terms of biological role, involved in the uptake of p-toluenesulphonate (TSA). The sequence is that of Probable inner membrane transporter protein TsaS (tsaS) from Comamonas testosteroni (Pseudomonas testosteroni).